Reading from the N-terminus, the 394-residue chain is Succinate--CoA ligase [ADP-forming] subunit beta 1 (394 aa).

The region spanning 9–237 (RDLFAKHDVP…KAAANPLEAA (229 aa)) is the ATP-grasp domain. ATP contacts are provided by residues Lys45, 52–54 (GRG), Glu92, Pro95, and Glu100. Mg(2+) contacts are provided by Asn192 and Asp206. Substrate contacts are provided by residues Asn257 and 319 to 321 (GIT).

Belongs to the succinate/malate CoA ligase beta subunit family. In terms of assembly, heterotetramer of two alpha and two beta subunits. Requires Mg(2+) as cofactor.

The enzyme catalyses succinate + ATP + CoA = succinyl-CoA + ADP + phosphate. It carries out the reaction GTP + succinate + CoA = succinyl-CoA + GDP + phosphate. Its pathway is carbohydrate metabolism; tricarboxylic acid cycle; succinate from succinyl-CoA (ligase route): step 1/1. Succinyl-CoA synthetase functions in the citric acid cycle (TCA), coupling the hydrolysis of succinyl-CoA to the synthesis of either ATP or GTP and thus represents the only step of substrate-level phosphorylation in the TCA. The beta subunit provides nucleotide specificity of the enzyme and binds the substrate succinate, while the binding sites for coenzyme A and phosphate are found in the alpha subunit. The chain is Succinate--CoA ligase [ADP-forming] subunit beta 1 from Streptomyces coelicolor (strain ATCC BAA-471 / A3(2) / M145).